A 743-amino-acid chain; its full sequence is Polyribonucleotide nucleotidyltransferase (743 aa).

Mg(2+) contacts are provided by aspartate 489 and aspartate 495. Residues 556 to 618 (PRIEKMHIGK…PCIDAAIGMI (63 aa)) enclose the KH domain. Residues 628-698 (GETYPGKITS…KTGKFKLSRK (71 aa)) form the S1 motif domain. The segment at 704–743 (PEGYVEPQPRERRERREGGREGGRNFERRGGDRDHREPRG) is disordered.

It belongs to the polyribonucleotide nucleotidyltransferase family. Mg(2+) is required as a cofactor.

It localises to the cytoplasm. It carries out the reaction RNA(n+1) + phosphate = RNA(n) + a ribonucleoside 5'-diphosphate. Its function is as follows. Involved in mRNA degradation. Catalyzes the phosphorolysis of single-stranded polyribonucleotides processively in the 3'- to 5'-direction. This is Polyribonucleotide nucleotidyltransferase from Porphyromonas gingivalis (strain ATCC BAA-308 / W83).